We begin with the raw amino-acid sequence, 154 residues long: Myoglobin (154 aa).

Residues Gly-2–Lys-148 form the Globin domain. Position 4 is a phosphoserine (Ser-4). A nitrite-binding site is contributed by His-65. His-65 provides a ligand contact to O2. At Thr-68 the chain carries Phosphothreonine. His-94 contacts heme b.

It belongs to the globin family. Monomeric.

It is found in the cytoplasm. The protein localises to the sarcoplasm. The catalysed reaction is Fe(III)-heme b-[protein] + nitric oxide + H2O = Fe(II)-heme b-[protein] + nitrite + 2 H(+). It carries out the reaction H2O2 + AH2 = A + 2 H2O. Functionally, monomeric heme protein which primary function is to store oxygen and facilitate its diffusion within muscle tissues. Reversibly binds oxygen through a pentacoordinated heme iron and enables its timely and efficient release as needed during periods of heightened demand. Depending on the oxidative conditions of tissues and cells, and in addition to its ability to bind oxygen, it also has a nitrite reductase activity whereby it regulates the production of bioactive nitric oxide. Under stress conditions, like hypoxia and anoxia, it also protects cells against reactive oxygen species thanks to its pseudoperoxidase activity. This is Myoglobin (MB) from Perodicticus potto edwarsi (Potto).